A 393-amino-acid polypeptide reads, in one-letter code: Interferon regulatory factor 9 (393 aa).

Positions 9-116 form a DNA-binding region, IRF tryptophan pentad repeat; that stretch reads TRKLRNWVVE…EPYKVYQLLP (108 aa). Disordered regions lie at residues 120 to 151 and 163 to 202; these read VSGQ…AMQN and LNNE…APFQ. The residue at position 139 (Ser139) is a Phosphoserine.

Belongs to the IRF family. As to quaternary structure, interacts with STAT2 in the cytoplasm. Forms the interferon-stimulated gene factor 3 complex (ISGF3) with the heterodimer STAT1:STAT2; upon stimulation. In terms of assembly, (Microbial infection) Interacts with measles virus V protein; this interaction prevents the binding of IRF9 to STAT2 and thereby the type I interferon signaling pathway. (Microbial infection) Ubiquitinated by Herpes simplex virus 2 E3 ubiquitin ligase ICP22.

The protein localises to the cytoplasm. It localises to the nucleus. In terms of biological role, transcription factor that plays an essential role in anti-viral immunity. It mediates signaling by type I IFNs (IFN-alpha and IFN-beta). Following type I IFN binding to cell surface receptors, Jak kinases (TYK2 and JAK1) are activated, leading to tyrosine phosphorylation of STAT1 and STAT2. IRF9/ISGF3G associates with the phosphorylated STAT1:STAT2 dimer to form a complex termed ISGF3 transcription factor, that enters the nucleus. ISGF3 binds to the IFN stimulated response element (ISRE) to activate the transcription of interferon stimulated genes, which drive the cell in an antiviral state. The protein is Interferon regulatory factor 9 (IRF9) of Homo sapiens (Human).